Here is a 1212-residue protein sequence, read N- to C-terminus: DNA-directed RNA polymerase subunit beta' (1212 aa).

Residues C60, C62, C75, and C78 each contribute to the Zn(2+) site. Mg(2+) contacts are provided by D450, D452, and D454. Zn(2+)-binding residues include C819, C893, C900, and C903.

This sequence belongs to the RNA polymerase beta' chain family. As to quaternary structure, the RNAP catalytic core consists of 2 alpha, 1 beta, 1 beta' and 1 omega subunit. When a sigma factor is associated with the core the holoenzyme is formed, which can initiate transcription. Requires Mg(2+) as cofactor. Zn(2+) serves as cofactor.

The catalysed reaction is RNA(n) + a ribonucleoside 5'-triphosphate = RNA(n+1) + diphosphate. Its function is as follows. DNA-dependent RNA polymerase catalyzes the transcription of DNA into RNA using the four ribonucleoside triphosphates as substrates. The chain is DNA-directed RNA polymerase subunit beta' from Streptococcus thermophilus (strain ATCC BAA-491 / LMD-9).